Here is a 753-residue protein sequence, read N- to C-terminus: Probable phosphoenolpyruvate synthase (753 aa).

His-398 acts as the Tele-phosphohistidine intermediate in catalysis. Substrate is bound by residues Arg-488, Arg-535, Glu-631, Gly-653, Thr-654, Asn-655, and Asp-656. Glu-631 contributes to the Mg(2+) binding site. Position 656 (Asp-656) interacts with Mg(2+). The active-site Proton donor is the Cys-703.

Belongs to the PEP-utilizing enzyme family. It depends on Mg(2+) as a cofactor.

The enzyme catalyses pyruvate + ATP + H2O = phosphoenolpyruvate + AMP + phosphate + 2 H(+). Its pathway is carbohydrate biosynthesis; gluconeogenesis. Functionally, catalyzes the phosphorylation of pyruvate to phosphoenolpyruvate. The polypeptide is Probable phosphoenolpyruvate synthase (ppsA) (Archaeoglobus fulgidus (strain ATCC 49558 / DSM 4304 / JCM 9628 / NBRC 100126 / VC-16)).